We begin with the raw amino-acid sequence, 107 residues long: Phosphoribosyl-ATP pyrophosphatase (107 aa).

It belongs to the PRA-PH family.

The protein resides in the cytoplasm. The catalysed reaction is 1-(5-phospho-beta-D-ribosyl)-ATP + H2O = 1-(5-phospho-beta-D-ribosyl)-5'-AMP + diphosphate + H(+). It participates in amino-acid biosynthesis; L-histidine biosynthesis; L-histidine from 5-phospho-alpha-D-ribose 1-diphosphate: step 2/9. The polypeptide is Phosphoribosyl-ATP pyrophosphatase (Caulobacter sp. (strain K31)).